The sequence spans 760 residues: Golgin subfamily A member 5 (760 aa).

At M1–R727 the chain is on the cytoplasmic side. Positions V95 to F111 are enriched in polar residues. Disordered regions lie at residues V95–P114, D126–D216, and T432–K456. The span at Q135–V146 shows a compositional bias: basic and acidic residues. The span at K148 to L166 shows a compositional bias: polar residues. Positions P174–S201 are enriched in low complexity. Positions Q249–H668 form a coiled coil. The segment covering L441–S450 has biased composition (polar residues). The chain crosses the membrane as a helical; Anchor for type IV membrane protein span at residues V728–Y748. Topologically, residues T749 to R760 are extracellular.

The protein resides in the golgi apparatus membrane. In terms of biological role, involved in maintaining Golgi structure. Stimulates the formation of Golgi stacks and ribbons. Involved in intra-Golgi retrograde transport. This chain is Golgin subfamily A member 5 (golga5), found in Danio rerio (Zebrafish).